We begin with the raw amino-acid sequence, 1351 residues long: DNA-directed RNA polymerase subunit beta' (1351 aa).

4 residues coordinate Zn(2+): C70, C72, C85, and C88. D460, D462, and D464 together coordinate Mg(2+). 4 residues coordinate Zn(2+): C801, C875, C882, and C885.

Belongs to the RNA polymerase beta' chain family. As to quaternary structure, the RNAP catalytic core consists of 2 alpha, 1 beta, 1 beta' and 1 omega subunit. When a sigma factor is associated with the core the holoenzyme is formed, which can initiate transcription. Requires Mg(2+) as cofactor. It depends on Zn(2+) as a cofactor.

The enzyme catalyses RNA(n) + a ribonucleoside 5'-triphosphate = RNA(n+1) + diphosphate. DNA-dependent RNA polymerase catalyzes the transcription of DNA into RNA using the four ribonucleoside triphosphates as substrates. This Syntrophobacter fumaroxidans (strain DSM 10017 / MPOB) protein is DNA-directed RNA polymerase subunit beta'.